We begin with the raw amino-acid sequence, 130 residues long: Small ribosomal subunit protein uS9 (130 aa).

The protein belongs to the universal ribosomal protein uS9 family.

This Aeromonas hydrophila subsp. hydrophila (strain ATCC 7966 / DSM 30187 / BCRC 13018 / CCUG 14551 / JCM 1027 / KCTC 2358 / NCIMB 9240 / NCTC 8049) protein is Small ribosomal subunit protein uS9.